The primary structure comprises 304 residues: 4-diphosphocytidyl-2-C-methyl-D-erythritol kinase (304 aa).

Lysine 20 is an active-site residue. 106–116 (PVASGIGGGSG) provides a ligand contact to ATP. Aspartate 148 is an active-site residue.

This sequence belongs to the GHMP kinase family. IspE subfamily.

The catalysed reaction is 4-CDP-2-C-methyl-D-erythritol + ATP = 4-CDP-2-C-methyl-D-erythritol 2-phosphate + ADP + H(+). It participates in isoprenoid biosynthesis; isopentenyl diphosphate biosynthesis via DXP pathway; isopentenyl diphosphate from 1-deoxy-D-xylulose 5-phosphate: step 3/6. In terms of biological role, catalyzes the phosphorylation of the position 2 hydroxy group of 4-diphosphocytidyl-2C-methyl-D-erythritol. In Bartonella bacilliformis (strain ATCC 35685 / KC583 / Herrer 020/F12,63), this protein is 4-diphosphocytidyl-2-C-methyl-D-erythritol kinase.